A 268-amino-acid chain; its full sequence is Nickel import ATP-binding protein NikE (268 aa).

The 249-residue stretch at 4-252 (LNVSDLSHHY…SSDAGRVLQN (249 aa)) folds into the ABC transporter domain. Position 45–52 (45–52 (GRSGCGKS)) interacts with ATP.

The protein belongs to the ABC transporter superfamily. Nickel importer (TC 3.A.1.5.3) family. In terms of assembly, the complex is composed of two ATP-binding proteins (NikD and NikE), two transmembrane proteins (NikB and NikC) and a solute-binding protein (NikA).

It localises to the cell inner membrane. The catalysed reaction is Ni(2+)(out) + ATP + H2O = Ni(2+)(in) + ADP + phosphate + H(+). Its function is as follows. Part of the ABC transporter complex NikABCDE involved in nickel import. Responsible for energy coupling to the transport system. The chain is Nickel import ATP-binding protein NikE from Escherichia coli O157:H7.